Here is a 225-residue protein sequence, read N- to C-terminus: Putative membrane protease YugP (225 aa).

His95 contributes to the Zn(2+) binding site. The active site involves Glu96. Zn(2+) is bound by residues His99 and His103. A run of 3 helical transmembrane segments spans residues 116–138 (IFPV…MLLG), 140–162 (LNLI…ITLP), and 192–212 (VLSA…FELL).

The protein resides in the cell membrane. The chain is Putative membrane protease YugP (yugP) from Bacillus subtilis (strain 168).